We begin with the raw amino-acid sequence, 457 residues long: Transcription termination factor Rho (457 aa).

Residues 1 to 23 (MNTTNKQLTEELNNTESNNDHND) form a disordered region. In terms of domain architecture, Rho RNA-BD spans 77 to 152 (LIVGEGVLEV…LKVNRVNFED (76 aa)). ATP is bound by residues 200–205 (GKGQRA), 212–217 (RTGKTV), and Arg-243.

Belongs to the Rho family. Homohexamer. The homohexamer assembles into an open ring structure.

Facilitates transcription termination by a mechanism that involves Rho binding to the nascent RNA, activation of Rho's RNA-dependent ATPase activity, and release of the mRNA from the DNA template. This is Transcription termination factor Rho from Rickettsia prowazekii (strain Madrid E).